The primary structure comprises 553 residues: Coiled-coil domain-containing protein 85A (553 aa).

The span at 1 to 28 (MSKAAGGAAAAAAAAESCSPAPAGSSAA) shows a compositional bias: low complexity. The interval 1 to 37 (MSKAAGGAAAAAAAAESCSPAPAGSSAAPPAPVEDLS) is disordered. Coiled-coil stretches lie at residues 43–109 (ELLQ…RDLC) and 137–169 (MHKEVALYLQKLKDLEVKQEEVVKENMELKELC). 3 disordered regions span residues 203–414 (YVRD…GMNE), 433–461 (ENRMLPQASQNRRQPPTRNSSNMEKGWGS), and 491–518 (SGADGSNSSPNSAASFSGHATPSQQPEP). Positions 209 to 220 (DGSSTSSTGSTD) are enriched in low complexity. Residues 236-260 (HLQKPRSEGSPEHSKHRSASPEHPQ) are compositionally biased toward basic and acidic residues. Positions 376–389 (GGSGGSGGSGGGSR) are enriched in gly residues. Basic and acidic residues predominate over residues 391–403 (GTLRRQAQEDGSP). Residues 412-443 (MNESTLSYVRQLEARVRQLEEENRMLPQASQN) are a coiled coil. The span at 439–455 (QASQNRRQPPTRNSSNM) shows a compositional bias: polar residues. The span at 491 to 508 (SGADGSNSSPNSAASFSG) shows a compositional bias: low complexity. Residue Arg-541 is modified to Asymmetric dimethylarginine.

It belongs to the CCDC85 family. In terms of assembly, may interact with ARVCF; CTNND1; CTNND2 and PKP4.

It localises to the cell junction. The protein localises to the adherens junction. Its function is as follows. May play a role in cell-cell adhesion and epithelium development through its interaction with proteins of the beta-catenin family. The protein is Coiled-coil domain-containing protein 85A (CCDC85A) of Homo sapiens (Human).